Consider the following 283-residue polypeptide: Pantothenate synthetase (283 aa).

30–37 serves as a coordination point for ATP; sequence MGTLHDGH. The active-site Proton donor is the His37. Gln61 is a (R)-pantoate binding site. Gln61 contacts beta-alanine. An ATP-binding site is contributed by 148–151; the sequence is GLKD. Gln154 contacts (R)-pantoate. ATP is bound at residue 185-188; sequence MSSR.

This sequence belongs to the pantothenate synthetase family. In terms of assembly, homodimer.

The protein resides in the cytoplasm. It carries out the reaction (R)-pantoate + beta-alanine + ATP = (R)-pantothenate + AMP + diphosphate + H(+). It functions in the pathway cofactor biosynthesis; (R)-pantothenate biosynthesis; (R)-pantothenate from (R)-pantoate and beta-alanine: step 1/1. Functionally, catalyzes the condensation of pantoate with beta-alanine in an ATP-dependent reaction via a pantoyl-adenylate intermediate. This chain is Pantothenate synthetase, found in Leptospira biflexa serovar Patoc (strain Patoc 1 / Ames).